A 1405-amino-acid chain; its full sequence is DNA-directed RNA polymerase subunit beta' (1405 aa).

Residues Cys-70, Cys-72, Cys-85, and Cys-88 each contribute to the Zn(2+) site. Mg(2+)-binding residues include Asp-460, Asp-462, and Asp-464. Zn(2+) is bound by residues Cys-814, Cys-888, Cys-895, and Cys-898.

Belongs to the RNA polymerase beta' chain family. As to quaternary structure, the RNAP catalytic core consists of 2 alpha, 1 beta, 1 beta' and 1 omega subunit. When a sigma factor is associated with the core the holoenzyme is formed, which can initiate transcription. It depends on Mg(2+) as a cofactor. Requires Zn(2+) as cofactor.

The enzyme catalyses RNA(n) + a ribonucleoside 5'-triphosphate = RNA(n+1) + diphosphate. Its function is as follows. DNA-dependent RNA polymerase catalyzes the transcription of DNA into RNA using the four ribonucleoside triphosphates as substrates. The polypeptide is DNA-directed RNA polymerase subunit beta' (Shewanella sediminis (strain HAW-EB3)).